A 373-amino-acid chain; its full sequence is MSQNYYQILGVSKTASQADLKKAYLKLAKQYHPDTTDAKDAEKKFKEINAAYDVLKDEQTRAAYDRLGHDAFQNQQSRGGGGNHGGFHPDINDIFGDFFSDFMGGSRRSSRPTSAKVRGSDLKYNLTINLEEAFHGIEKNISFSSTVKCDTCHGSGSEKGETVTTCDACSGVGATRMQQGFFTIEQACHKCQGNGHIIKNPCKKCHGMGRYHKQRNLSVNIPAGVENGTRIRHTGEGEAGIRGGNSGDLYVDITIKPHDIYKVDGANLHCKLPISFVNAALGGEIEVPVIEGGKVNLTIPAGTQNGDQLRLRSKGMSKMRSTIRGDMLTHIHVEVPKNLSKRQRELLEEFKKESINEKENDGSFFNKMKSLWS.

Residues 4-68 (NYYQILGVSK…QTRAAYDRLG (65 aa)) enclose the J domain. Residues 136–214 (GIEKNISFSS…CHGMGRYHKQ (79 aa)) form a CR-type zinc finger. The Zn(2+) site is built by Cys149, Cys152, Cys166, Cys169, Cys188, Cys191, Cys202, and Cys205. 4 CXXCXGXG motif repeats span residues 149 to 156 (CDTCHGSG), 166 to 173 (CDACSGVG), 188 to 195 (CHKCQGNG), and 202 to 209 (CKKCHGMG).

Belongs to the DnaJ family. In terms of assembly, homodimer. The cofactor is Zn(2+).

It localises to the cytoplasm. Functionally, participates actively in the response to hyperosmotic and heat shock by preventing the aggregation of stress-denatured proteins and by disaggregating proteins, also in an autonomous, DnaK-independent fashion. Unfolded proteins bind initially to DnaJ; upon interaction with the DnaJ-bound protein, DnaK hydrolyzes its bound ATP, resulting in the formation of a stable complex. GrpE releases ADP from DnaK; ATP binding to DnaK triggers the release of the substrate protein, thus completing the reaction cycle. Several rounds of ATP-dependent interactions between DnaJ, DnaK and GrpE are required for fully efficient folding. Also involved, together with DnaK and GrpE, in the DNA replication of plasmids through activation of initiation proteins. In Rickettsia peacockii (strain Rustic), this protein is Chaperone protein DnaJ.